Consider the following 94-residue polypeptide: MKISEKEVQHVAHLSRLHLDQDELASMTEQLDGILSYMEKLAEVDTEGVLPTTHAFSKTNAFREDIVKDSLSQEESLANGPVQNGTAFQVPRVI.

It belongs to the GatC family. Heterotrimer of A, B and C subunits.

It carries out the reaction L-glutamyl-tRNA(Gln) + L-glutamine + ATP + H2O = L-glutaminyl-tRNA(Gln) + L-glutamate + ADP + phosphate + H(+). The catalysed reaction is L-aspartyl-tRNA(Asn) + L-glutamine + ATP + H2O = L-asparaginyl-tRNA(Asn) + L-glutamate + ADP + phosphate + 2 H(+). Functionally, allows the formation of correctly charged Asn-tRNA(Asn) or Gln-tRNA(Gln) through the transamidation of misacylated Asp-tRNA(Asn) or Glu-tRNA(Gln) in organisms which lack either or both of asparaginyl-tRNA or glutaminyl-tRNA synthetases. The reaction takes place in the presence of glutamine and ATP through an activated phospho-Asp-tRNA(Asn) or phospho-Glu-tRNA(Gln). The protein is Aspartyl/glutamyl-tRNA(Asn/Gln) amidotransferase subunit C of Desulfotalea psychrophila (strain LSv54 / DSM 12343).